The chain runs to 466 residues: Soluble pyridine nucleotide transhydrogenase (466 aa).

Residue 36–45 (ERYNNVGGGC) participates in FAD binding.

This sequence belongs to the class-I pyridine nucleotide-disulfide oxidoreductase family. FAD serves as cofactor.

The protein localises to the cytoplasm. The enzyme catalyses NAD(+) + NADPH = NADH + NADP(+). Conversion of NADPH, generated by peripheral catabolic pathways, to NADH, which can enter the respiratory chain for energy generation. The protein is Soluble pyridine nucleotide transhydrogenase of Yersinia enterocolitica serotype O:8 / biotype 1B (strain NCTC 13174 / 8081).